Reading from the N-terminus, the 529-residue chain is Ribonuclease Y (529 aa).

The helical transmembrane segment at 4–24 (GLIYISLEVIVACLISALAMY) threads the bilayer. Positions 216–297 (FTNRIALPCS…NRIEEVYHRV (82 aa)) constitute a KH domain. Positions 342 to 435 (ALQHSKEVAL…VCAADALSAG (94 aa)) constitute an HD domain.

The protein belongs to the RNase Y family.

Its subcellular location is the cell membrane. Endoribonuclease that initiates mRNA decay. This Helicobacter acinonychis (strain Sheeba) protein is Ribonuclease Y.